The primary structure comprises 66 residues: Large ribosomal subunit protein bL35 (66 aa).

Over residues 1–16 (MPKQKTHRASAKRFKR) the composition is skewed to basic residues. A disordered region spans residues 1 to 21 (MPKQKTHRASAKRFKRTGSGG).

Belongs to the bacterial ribosomal protein bL35 family.

The polypeptide is Large ribosomal subunit protein bL35 (Streptococcus gordonii (strain Challis / ATCC 35105 / BCRC 15272 / CH1 / DL1 / V288)).